The primary structure comprises 396 residues: Probable porphobilinogen deaminase (396 aa).

Positions 159-224 (APALHREHER…DTASSSEFEQ (66 aa)) are disordered. The tract at residues 159–245 (APALHREHER…LQQSAMERDP (87 aa)) is insert. The segment covering 162 to 189 (LHREHERRTEAEKEAQSRDAREQRRGDY) has biased composition (basic and acidic residues). Positions 200–215 (LDTEDGEEGAADDGDD) are enriched in acidic residues. An S-(dipyrrolylmethanemethyl)cysteine modification is found at Cys-328.

Belongs to the HMBS family. Dipyrromethane serves as cofactor.

The catalysed reaction is 4 porphobilinogen + H2O = hydroxymethylbilane + 4 NH4(+). It participates in porphyrin-containing compound metabolism; protoporphyrin-IX biosynthesis; coproporphyrinogen-III from 5-aminolevulinate: step 2/4. Tetrapolymerization of the monopyrrole PBG into the hydroxymethylbilane pre-uroporphyrinogen in several discrete steps. The sequence is that of Probable porphobilinogen deaminase (hemC) from Halobacterium salinarum (strain ATCC 700922 / JCM 11081 / NRC-1) (Halobacterium halobium).